The chain runs to 205 residues: MNQQYPSVLLEKAVGEFSKLPGIGRKTAMRLVLHLLRQDTATVEAFGNSIITLKREVKYCKVCHNISDTETCQICANPQRDASTVCVVENIRDVMAVEATQQYRGLYHVLGGVISPMDGVGPSDLQIESLVQRVSEGGIKEVILALSTTMEGDTTNFYIYRKLEKMGVKLSVIARGISVGDELEYADEITLGRSIVNRTLFTGTV.

The segment at 60–75 (CKVCHNISDTETCQIC) adopts a C4-type zinc-finger fold. One can recognise a Toprim domain in the interval 83–178 (STVCVVENIR…KLSVIARGIS (96 aa)).

It belongs to the RecR family.

May play a role in DNA repair. It seems to be involved in an RecBC-independent recombinational process of DNA repair. It may act with RecF and RecO. This chain is Recombination protein RecR, found in Bacteroides thetaiotaomicron (strain ATCC 29148 / DSM 2079 / JCM 5827 / CCUG 10774 / NCTC 10582 / VPI-5482 / E50).